A 309-amino-acid chain; its full sequence is Probable lipid kinase YegS-like (309 aa).

The 134-residue stretch at 1-134 (MAPSHWRLIL…VDLLRIDADH (134 aa)) folds into the DAGKc domain. Residues T39, 65-71 (GDGTLSE), and T96 each bind ATP. The Mg(2+) site is built by L219, D222, and L224. Catalysis depends on E280, which acts as the Proton acceptor.

It belongs to the diacylglycerol/lipid kinase family. YegS lipid kinase subfamily. Mg(2+) is required as a cofactor. The cofactor is Ca(2+).

The protein localises to the cytoplasm. In terms of biological role, probably phosphorylates lipids; the in vivo substrate is unknown. This is Probable lipid kinase YegS-like from Xanthomonas axonopodis pv. citri (strain 306).